We begin with the raw amino-acid sequence, 331 residues long: Cytosolic sulfotransferase 8 (331 aa).

Positions 1-11 are enriched in basic and acidic residues; that stretch reads MGEKDIPRNLK. The disordered stretch occupies residues 1 to 31; sequence MGEKDIPRNLKEEEEEEEENQSEETKSLISS. Residues 12 to 22 show a composition bias toward acidic residues; that stretch reads EEEEEEEENQS. Position 80–85 (80–85) interacts with 3'-phosphoadenylyl sulfate; that stretch reads KSGTTW. The active-site Proton acceptor is histidine 145. 3'-phosphoadenylyl sulfate is bound by residues arginine 167, serine 175, tyrosine 231, and 297 to 299; that span reads RKG.

This sequence belongs to the sulfotransferase 1 family. In terms of tissue distribution, expressed in seedlings and roots.

Its subcellular location is the cytoplasm. Its function is as follows. Sulfotransferase that utilizes 3'-phospho-5'-adenylyl sulfate (PAPS) as sulfonate donor. No activity with brassinosteroids. The protein is Cytosolic sulfotransferase 8 (SOT8) of Arabidopsis thaliana (Mouse-ear cress).